Here is a 230-residue protein sequence, read N- to C-terminus: Demethylmenaquinone methyltransferase (230 aa).

S-adenosyl-L-methionine-binding positions include T62, D80, 100-101 (DG), and S117.

Belongs to the class I-like SAM-binding methyltransferase superfamily. MenG/UbiE family.

It carries out the reaction a 2-demethylmenaquinol + S-adenosyl-L-methionine = a menaquinol + S-adenosyl-L-homocysteine + H(+). It participates in quinol/quinone metabolism; menaquinone biosynthesis; menaquinol from 1,4-dihydroxy-2-naphthoate: step 2/2. Its function is as follows. Methyltransferase required for the conversion of demethylmenaquinol (DMKH2) to menaquinol (MKH2). The polypeptide is Demethylmenaquinone methyltransferase (Corynebacterium urealyticum (strain ATCC 43042 / DSM 7109)).